The chain runs to 1297 residues: Phosphoribosylformylglycinamidine synthase (1297 aa).

ATP contacts are provided by residues 307–318 (GASTGSGGEIRD) and Ala-678. Positions 718, 722, and 886 each coordinate Mg(2+). Residues 1044 to 1297 (MAILREQGVN…MFQNARKNLA (254 aa)) enclose the Glutamine amidotransferase type-1 domain. Cys-1137 serves as the catalytic Nucleophile. Catalysis depends on residues His-1262 and Glu-1264.

This sequence in the N-terminal section; belongs to the FGAMS family. As to quaternary structure, monomer.

It localises to the cytoplasm. It catalyses the reaction N(2)-formyl-N(1)-(5-phospho-beta-D-ribosyl)glycinamide + L-glutamine + ATP + H2O = 2-formamido-N(1)-(5-O-phospho-beta-D-ribosyl)acetamidine + L-glutamate + ADP + phosphate + H(+). It functions in the pathway purine metabolism; IMP biosynthesis via de novo pathway; 5-amino-1-(5-phospho-D-ribosyl)imidazole from N(2)-formyl-N(1)-(5-phospho-D-ribosyl)glycinamide: step 1/2. Functionally, phosphoribosylformylglycinamidine synthase involved in the purines biosynthetic pathway. Catalyzes the ATP-dependent conversion of formylglycinamide ribonucleotide (FGAR) and glutamine to yield formylglycinamidine ribonucleotide (FGAM) and glutamate. In Vibrio vulnificus (strain YJ016), this protein is Phosphoribosylformylglycinamidine synthase.